Reading from the N-terminus, the 191-residue chain is UMP-CMP kinase 2 (191 aa).

Position 12–17 (Gly-12–Thr-17) interacts with ATP. Positions Ser-32–Val-62 are NMP. A ribonucleoside 5'-phosphate contacts are provided by residues Arg-38, Ser-60 to Val-62, and Gly-88 to Arg-91. Asn-95 is a CMP binding site. Residues Asn-128–Asp-136 are LID. Arg-129 is a binding site for ATP. 2 residues coordinate a ribonucleoside 5'-phosphate: Arg-133 and Arg-144. Arg-172 serves as a coordination point for ATP.

Belongs to the adenylate kinase family. UMP-CMP kinase subfamily. In terms of assembly, monomer. Mg(2+) is required as a cofactor. As to expression, expressed in neurons and the pharynx.

It is found in the cytoplasm. Its subcellular location is the nucleus. It carries out the reaction CMP + ATP = CDP + ADP. The enzyme catalyses dCMP + ATP = dCDP + ADP. It catalyses the reaction UMP + ATP = UDP + ADP. Catalyzes the phosphorylation of pyrimidine nucleoside monophosphates at the expense of ATP. Plays an important role in de novo pyrimidine nucleotide biosynthesis. Has preference for UMP and CMP as phosphate acceptors. The polypeptide is UMP-CMP kinase 2 (Caenorhabditis elegans).